The following is a 138-amino-acid chain: Putative pre-16S rRNA nuclease (138 aa).

The protein belongs to the YqgF nuclease family.

The protein resides in the cytoplasm. Its function is as follows. Could be a nuclease involved in processing of the 5'-end of pre-16S rRNA. This is Putative pre-16S rRNA nuclease from Shigella dysenteriae serotype 1 (strain Sd197).